We begin with the raw amino-acid sequence, 263 residues long: 5'-nucleotidase SurE (263 aa).

4 residues coordinate a divalent metal cation: Asp-11, Asp-12, Ser-42, and Asn-96.

The protein belongs to the SurE nucleotidase family. A divalent metal cation serves as cofactor.

The protein localises to the cytoplasm. The enzyme catalyses a ribonucleoside 5'-phosphate + H2O = a ribonucleoside + phosphate. Its function is as follows. Nucleotidase that shows phosphatase activity on nucleoside 5'-monophosphates. The polypeptide is 5'-nucleotidase SurE (Methanocorpusculum labreanum (strain ATCC 43576 / DSM 4855 / Z)).